A 92-amino-acid polypeptide reads, in one-letter code: Movement protein (92 aa).

A helical membrane pass occupies residues 38-58 (VIALVVILVSVGVFYLAYTLF).

It belongs to the mastrevirus movement protein family. As to quaternary structure, interacts with the capsid protein (CP). Part of a MP-CP-viral DNA complex.

The protein localises to the host membrane. Its function is as follows. Involved in the viral transport within, and between cells. This is Movement protein from Phaseolus vulgaris (Kidney bean).